The following is a 441-amino-acid chain: Gamma-glutamyl phosphate reductase (441 aa).

It belongs to the gamma-glutamyl phosphate reductase family.

It is found in the cytoplasm. It catalyses the reaction L-glutamate 5-semialdehyde + phosphate + NADP(+) = L-glutamyl 5-phosphate + NADPH + H(+). It participates in amino-acid biosynthesis; L-proline biosynthesis; L-glutamate 5-semialdehyde from L-glutamate: step 2/2. Catalyzes the NADPH-dependent reduction of L-glutamate 5-phosphate into L-glutamate 5-semialdehyde and phosphate. The product spontaneously undergoes cyclization to form 1-pyrroline-5-carboxylate. In Hydrogenobaculum sp. (strain Y04AAS1), this protein is Gamma-glutamyl phosphate reductase.